Here is an 87-residue protein sequence, read N- to C-terminus: UPF0386 protein RSKD131_0371 (87 aa).

Belongs to the UPF0386 family.

The protein is UPF0386 protein RSKD131_0371 of Cereibacter sphaeroides (strain KD131 / KCTC 12085) (Rhodobacter sphaeroides).